Reading from the N-terminus, the 1156-residue chain is Cartilage intermediate layer protein 2 (1156 aa).

The first 20 residues, 1–20, serve as a signal peptide directing secretion; the sequence is MASLLPLLCLCVVAAHLAGA. One can recognise a TSP type-1 domain in the interval 146–197; it reads EASWGAWGPWGPCSGSCGPGRRLRRRHCPSPAGDACPGRPLEAQKCVRPRCP. 3 cysteine pairs are disulfide-bonded: cysteine 158–cysteine 191, cysteine 162–cysteine 196, and cysteine 173–cysteine 181. N-linked (GlcNAc...) asparagine glycosylation is found at asparagine 276, asparagine 308, and asparagine 329. The Ig-like C2-type domain maps to 292–376; it reads PYLVKHPESR…AVRSGTARLT (85 aa). Cysteine 313 and cysteine 359 are joined by a disulfide. Positions 1134–1156 are disordered; that stretch reads SEAAQAQARASGPLRTRRGRVRQ.

May be cleaved into 2 chains possibly by a furin-like protease upon or preceding secretion. In terms of tissue distribution, expressed in articular chondrocytes but not in knee meniscal cartilage cells. Localizes to the intermediate to deep zone of articular cartilage.

It is found in the secreted. The protein resides in the extracellular space. It localises to the extracellular matrix. Its function is as follows. May play a role in cartilage scaffolding. In Homo sapiens (Human), this protein is Cartilage intermediate layer protein 2 (CILP2).